A 335-amino-acid chain; its full sequence is Serpentine receptor class gamma-11 (335 aa).

7 consecutive transmembrane segments (helical) span residues 33-53, 66-86, 98-118, 154-174, 202-222, 242-262, and 271-291; these read FLQI…LYTI, FFLI…LDII, PIIA…MIVL, LKYL…NLII, FQLI…SVIF, GTAY…LFAF, and TIFG…PIIM.

It belongs to the nematode receptor-like protein srg family.

It is found in the membrane. The sequence is that of Serpentine receptor class gamma-11 (srg-11) from Caenorhabditis elegans.